We begin with the raw amino-acid sequence, 383 residues long: U-box domain-containing protein 63 (383 aa).

The segment at 166 to 186 (PDGNVSNSHRNTQQKRDFASV) is disordered. The U-box domain occupies 201–273 (SLKAILSDPV…HAFRQEEDSD (73 aa)).

It carries out the reaction S-ubiquitinyl-[E2 ubiquitin-conjugating enzyme]-L-cysteine + [acceptor protein]-L-lysine = [E2 ubiquitin-conjugating enzyme]-L-cysteine + N(6)-ubiquitinyl-[acceptor protein]-L-lysine.. Its pathway is protein modification; protein ubiquitination. In terms of biological role, functions as an E3 ubiquitin ligase. In Arabidopsis thaliana (Mouse-ear cress), this protein is U-box domain-containing protein 63 (PUB63).